Consider the following 243-residue polypeptide: ATP-dependent dethiobiotin synthetase BioD (243 aa).

12–17 provides a ligand contact to ATP; the sequence is DVGKTF. Threonine 16 contributes to the Mg(2+) binding site. Residue lysine 37 is part of the active site. Substrate is bound at residue serine 41. Residues aspartate 54, 115-118, and 179-180 each bind ATP; these read EGCG and NM. Mg(2+) is bound by residues aspartate 54 and glutamate 115.

Belongs to the dethiobiotin synthetase family. As to quaternary structure, homodimer. Mg(2+) serves as cofactor.

The protein resides in the cytoplasm. It carries out the reaction (7R,8S)-7,8-diammoniononanoate + CO2 + ATP = (4R,5S)-dethiobiotin + ADP + phosphate + 3 H(+). Its pathway is cofactor biosynthesis; biotin biosynthesis; biotin from 7,8-diaminononanoate: step 1/2. Functionally, catalyzes a mechanistically unusual reaction, the ATP-dependent insertion of CO2 between the N7 and N8 nitrogen atoms of 7,8-diaminopelargonic acid (DAPA, also called 7,8-diammoniononanoate) to form a ureido ring. The protein is ATP-dependent dethiobiotin synthetase BioD of Caldicellulosiruptor bescii (strain ATCC BAA-1888 / DSM 6725 / KCTC 15123 / Z-1320) (Anaerocellum thermophilum).